The chain runs to 355 residues: Meiotic coiled-coil protein 4 (355 aa).

The stretch at 298-338 (QRLSRTEINKEIIEIEKLELEVVQFQMSIANLINTQVEVTN) forms a coiled coil.

It is found in the cytoplasm. Functionally, has a role in meiosis. In Schizosaccharomyces pombe (strain 972 / ATCC 24843) (Fission yeast), this protein is Meiotic coiled-coil protein 4 (mcp4).